A 160-amino-acid polypeptide reads, in one-letter code: Adenosine 5'-monophosphoramidase HINT3 (160 aa).

Positions 24–132 constitute an HIT domain; that stretch reads IFCTIAKGDD…LAPYSQLYKW (109 aa). AMP contacts are provided by residues 50–51 and 119–121; these read DI and HLH. A Histidine triad motif motif is present at residues 117–121; sequence HLHLH. His119 (tele-AMP-histidine intermediate) is an active-site residue.

This sequence belongs to the HINT family. Forms dimers to octamers and even larger oligomer.

It is found in the cytoplasm. The protein resides in the nucleus. The enzyme catalyses adenosine 5'-phosphoramidate + H2O = AMP + NH4(+). Its function is as follows. Exhibits adenosine 5'-monophosphoramidase activity, hydrolyzing purine nucleotide phosphoramidates with a single phosphate group such as adenosine 5'monophosphoramidate (AMP-NH2) to yield AMP and NH2. Hydrolyzes lysyl-AMP (AMP-N-epsilon-(N-alpha-acetyl lysine methyl ester)) generated by lysine tRNA ligase. This chain is Adenosine 5'-monophosphoramidase HINT3 (hint3), found in Danio rerio (Zebrafish).